A 105-amino-acid polypeptide reads, in one-letter code: Large ribosomal subunit protein uL24 (105 aa).

It belongs to the universal ribosomal protein uL24 family. As to quaternary structure, part of the 50S ribosomal subunit.

Functionally, one of two assembly initiator proteins, it binds directly to the 5'-end of the 23S rRNA, where it nucleates assembly of the 50S subunit. In terms of biological role, one of the proteins that surrounds the polypeptide exit tunnel on the outside of the subunit. The chain is Large ribosomal subunit protein uL24 from Marinomonas sp. (strain MWYL1).